A 568-amino-acid polypeptide reads, in one-letter code: Probable inactive poly [ADP-ribose] polymerase SRO1 (568 aa).

The span at 1–18 (MEAKIVKVSDSSYKDGLG) shows a compositional bias: basic and acidic residues. The segment at 1-32 (MEAKIVKVSDSSYKDGLGKKRKHPGNYTPYDS) is disordered. The region spanning 77 to 152 (RYFSYYKKTG…ETGVKTQLAW (76 aa)) is the WWE domain. 2 disordered regions span residues 220–241 (DFQA…DSCS) and 453–500 (ILPT…RRPR). In terms of domain architecture, PARP catalytic spans 245 to 463 (DDAVEKWDKT…LPTTQSRHES (219 aa)). An RST domain is found at 497–568 (RRPRSPIMPF…TITGLQRSLG (72 aa)).

Interacts with DREB2A, DREB2B, DREB2C and NAC082. As to expression, expressed in young developing tissues, such as young leaves and flowers and root tips. In mature plants, expressed in vasculature of leaves and roots.

It is found in the nucleus matrix. Functionally, probable inactive ADP-ribosyltransferase that functions with RCD1 to regulate oxidative stress, hormonal and developmental responses. May regulate some stress-responsive genes. Seems to play a smaller developmental role than R. The polypeptide is Probable inactive poly [ADP-ribose] polymerase SRO1 (SRO1) (Arabidopsis thaliana (Mouse-ear cress)).